A 950-amino-acid chain; its full sequence is Oxysterol-binding protein-related protein 1 (950 aa).

The interval 1 to 237 (MNTEAEQQLL…NKVVHKALKR (237 aa)) is interaction with RAB7A. ANK repeat units follow at residues 47–76 (LGWTPLHLACYFGHKQVVEDLLKAGAKVNM), 80–109 (MGDTPLHRAAFTGRKELVLLLLEYDADSTV), and 175–204 (LGNTPLHCAAYRAHKQCVLKLLRSGADPSL). Positions 235 to 334 (LKRYEGPLWK…WLEAIEEHSA (100 aa)) constitute a PH domain. Positions 430-463 (NFKLEQEQEKNKILSEALETLATEHHELERSLVE) form a coiled coil. The FFAT signature appears at 469–483 (SILSEEEFYDALSGS). Serine 499 bears the Phosphoserine mark. Disordered regions lie at residues 502–530 (ENEVPGSSGKHRMSEGKDCGGGDALSNGI) and 795–821 (KKNTEEKKNSKQTSSSEESDEMPVPDS). Residues 879–913 (RAMENGEIDLASEEKKRLEEKQRAARKNRSKSEED) adopt a coiled-coil conformation.

This sequence belongs to the OSBP family. In terms of assembly, interacts (via FFAT motif) with VAPA and VAPB. Interacts with the GTP-bound form of RAB7A. Interacts with OAS1B. Interacts (via FFAT motif) with MOSPD2 (via MSP domain). In terms of tissue distribution, ubiquitous.

It is found in the late endosome. Functionally, binds phospholipids; exhibits strong binding to phosphatidic acid and weak binding to phosphatidylinositol 3-phosphate. Stabilizes GTP-bound RAB7A on late endosomes/lysosomes and alters functional properties of late endocytic compartments via its interaction with RAB7A. Binds 25-hydroxycholesterol and cholesterol. This chain is Oxysterol-binding protein-related protein 1, found in Mus musculus (Mouse).